Consider the following 445-residue polypeptide: Tubulin beta-4 chain (445 aa).

The MREI motif signature appears at 1–4 (MREI). Positions 11, 69, 138, 142, 143, 144, 204, and 226 each coordinate GTP. Glu-69 serves as a coordination point for Mg(2+). Residues 425 to 445 (YQDATAEEEGEFEEGEEEENA) are disordered. Residues 429 to 445 (TAEEEGEFEEGEEEENA) show a composition bias toward acidic residues. Glu-438 is modified (5-glutamyl polyglutamate).

The protein belongs to the tubulin family. Dimer of alpha and beta chains. A typical microtubule is a hollow water-filled tube with an outer diameter of 25 nm and an inner diameter of 15 nM. Alpha-beta heterodimers associate head-to-tail to form protofilaments running lengthwise along the microtubule wall with the beta-tubulin subunit facing the microtubule plus end conferring a structural polarity. Microtubules usually have 13 protofilaments but different protofilament numbers can be found in some organisms and specialized cells. Requires Mg(2+) as cofactor. Post-translationally, some glutamate residues at the C-terminus are polyglycylated, resulting in polyglycine chains on the gamma-carboxyl group. Glycylation is mainly limited to tubulin incorporated into axonemes (cilia and flagella) whereas glutamylation is prevalent in neuronal cells, centrioles, axonemes, and the mitotic spindle. Both modifications can coexist on the same protein on adjacent residues, and lowering polyglycylation levels increases polyglutamylation, and reciprocally. The precise function of polyglycylation is still unclear. In terms of processing, some glutamate residues at the C-terminus are polyglutamylated, resulting in polyglutamate chains on the gamma-carboxyl group. Polyglutamylation plays a key role in microtubule severing by spastin (SPAST). SPAST preferentially recognizes and acts on microtubules decorated with short polyglutamate tails: severing activity by SPAST increases as the number of glutamates per tubulin rises from one to eight, but decreases beyond this glutamylation threshold. As to expression, preferential expression in germ cells.

The protein localises to the cytoplasm. It is found in the cytoskeleton. Its function is as follows. Tubulin is the major constituent of microtubules, a cylinder consisting of laterally associated linear protofilaments composed of alpha- and beta-tubulin heterodimers. Microtubules grow by the addition of GTP-tubulin dimers to the microtubule end, where a stabilizing cap forms. Below the cap, tubulin dimers are in GDP-bound state, owing to GTPase activity of alpha-tubulin. The polypeptide is Tubulin beta-4 chain (tubb4) (Xenopus laevis (African clawed frog)).